A 232-amino-acid chain; its full sequence is RNA chaperone ProQ (232 aa).

The segment at 105 to 182 is disordered; it reads EAKARVQAQR…REEQHTPVSD (78 aa). Positions 117-136 are enriched in basic and acidic residues; that stretch reads QQAKKREAAATAGEKEDAPR. The segment covering 137–146 has biased composition (basic residues); sequence RERKPRPTTP. A compositionally biased stretch (basic and acidic residues) spans 147–177; the sequence is RRKEGAERKPRAQKPVEKAPKTVKAPREEQH.

Belongs to the ProQ family.

The protein localises to the cytoplasm. RNA chaperone with significant RNA binding, RNA strand exchange and RNA duplexing activities. May regulate ProP activity through an RNA-based, post-transcriptional mechanism. The sequence is that of RNA chaperone ProQ from Escherichia coli (strain K12).